A 122-amino-acid polypeptide reads, in one-letter code: Large ribosomal subunit protein uL14 (122 aa).

This sequence belongs to the universal ribosomal protein uL14 family. Part of the 50S ribosomal subunit. Forms a cluster with proteins L3 and L19. In the 70S ribosome, L14 and L19 interact and together make contacts with the 16S rRNA in bridges B5 and B8.

Its function is as follows. Binds to 23S rRNA. Forms part of two intersubunit bridges in the 70S ribosome. This Mycoplasma capricolum subsp. capricolum (strain California kid / ATCC 27343 / NCTC 10154) protein is Large ribosomal subunit protein uL14.